We begin with the raw amino-acid sequence, 214 residues long: Galactokinase (214 aa).

Positions 47, 53, 54, and 56 each coordinate alpha-D-galactose. The ATP site is built by Gly149, Gly151, Ser153, and Ser154. Asp199 is an alpha-D-galactose binding site. Catalysis depends on Asp199, which acts as the Proton acceptor.

Belongs to the GHMP kinase family. GalK subfamily.

It catalyses the reaction alpha-D-galactose + ATP = alpha-D-galactose 1-phosphate + ADP + H(+). It participates in carbohydrate metabolism; galactose metabolism. In terms of biological role, galactokinase is a key enzyme in the galactose metabolism where it catalyzes the conversion of alpha-D-galactose to galactose 1-phosphate. Can also induce the transcription of the gal genes in response to the organism being challenged with galactose as the sole source of carbon. In Candida maltosa (Yeast), this protein is Galactokinase.